A 488-amino-acid chain; its full sequence is uncharacterized protein (488 aa).

It belongs to the IIV-6 467R family.

This is an uncharacterized protein from Invertebrate iridescent virus 3 (IIV-3).